The sequence spans 278 residues: 2-dehydro-3-deoxyphosphooctonate aldolase (278 aa).

Belongs to the KdsA family.

The protein resides in the cytoplasm. It catalyses the reaction D-arabinose 5-phosphate + phosphoenolpyruvate + H2O = 3-deoxy-alpha-D-manno-2-octulosonate-8-phosphate + phosphate. Its pathway is carbohydrate biosynthesis; 3-deoxy-D-manno-octulosonate biosynthesis; 3-deoxy-D-manno-octulosonate from D-ribulose 5-phosphate: step 2/3. The protein operates within bacterial outer membrane biogenesis; lipopolysaccharide biosynthesis. The sequence is that of 2-dehydro-3-deoxyphosphooctonate aldolase from Bartonella quintana (strain Toulouse) (Rochalimaea quintana).